The following is a 1065-amino-acid chain: MLRSFSGAGKCKCRIPVSRQPVCGRSLRISSTLTPWNQSRRAASTVTSLDSFPNVGEKLHGFTVQEKKHVPELHLTAVRLKHDKTDADYLHVAREDKNNVFGIGFKTNPPDATGVPHILEHTTLCGSEKYPIRDPFFKMLPRSLSNFMNAFTSADHTTYPFATTNRQDFQNLLSVYLDATLHPLLKEEDFRQEGWRLGPEDPRSILTQGEQSKGNLQSEDVVFKGVVYNEMKGQISDANYLYYIKYRESICPSLNNSGGDPQYITDLTHQQLVDFSKRNYHPSNAKILTYGDMPLSVHLKQIGEVLDGFEKGQADTDVKLPLDLSRGPLNVTVPGPIDTFASEDKQYKTSTSWYMGDTTDVVETFSVGILSSLLLDGYGSPMYRALIEGGLGSSFTPNTGLDSSGRVPIFSVGLTGVSEADAPKVKSTIKRVFEESLSSGFNDEKVQGFLHQLELALRHKTANFGIGVMEKTLSSWFNGSNPMKELSWNEVIDEFKKKYEQGGYLESLMQKYLMNDNCLTFTMVGTPSYNKDLDDQEMVRKEKKLSELVERHGSVEQAVSALAEEELQLLKIQEEAQNADLSCLPSLRVEDISREKERKPVRESKMDDIDVVWREAPTNGLTYFQALNSFEELPDDLRLLLPLFNDCIMRLGTGDKTMEQWEDLIKLKTGGITTSTLHTSSPTELGKFREGLQFSGYALDNNIPDMLQILTTLVTETDFTSPHAPAMIQELLRMTTNGALDAVAGSGHRYALNAAAAGLSRSFWVQEQQSGLAQLQATANLLRDAESSPERLAELIDKLRLIQSFAISKGSGLRVRMVCEPSSASQNEIVLQKWLAGLPRNRSPTSPLDHTSVNSVANRVFYDLPYKVYYSGLAMQTVPFIDPSSAPLSVLSQLLTHKYLHPEIREKGGAYGAGASNGPIKGFFAFTSYRDPNPVNSLKVFQNSGIFARDRAWSDRELAEAKLGIFQGLDAPMSVDEEGARYFMSGVTHEMDQRWREQVLDVTAKDVNEVAQKFLVEGSRQSICLLGEKKDWADSDDWEVRKLSMNASGEPVIDPLSQDGAVASA.

Residues Met-1–Ala-42 constitute a mitochondrion transit peptide. His-117 provides a ligand contact to Zn(2+). Glu-120 (proton acceptor) is an active-site residue. His-121 contacts Zn(2+). The active site involves Glu-193. Residue Glu-230 coordinates Zn(2+).

This sequence belongs to the peptidase M16 family. PreP subfamily. In terms of assembly, monomer and homodimer; homodimerization is induced by binding of the substrate. It depends on Zn(2+) as a cofactor.

The protein localises to the mitochondrion intermembrane space. The protein resides in the mitochondrion matrix. Functionally, degrades mitochondrial transit peptides after their cleavage in the intermembrane space or in the matrix, and presequence peptides; clearance of these peptides is required to keep the presequence processing machinery running. Preferentially cleaves the N-terminal side of paired basic amino acid residues. Also degrades other unstructured peptides. May function as an ATP-dependent peptidase as opposed to a metalloendopeptidase. The chain is Presequence protease, mitochondrial (cym1) from Aspergillus fumigatus (strain ATCC MYA-4609 / CBS 101355 / FGSC A1100 / Af293) (Neosartorya fumigata).